We begin with the raw amino-acid sequence, 368 residues long: Protein PXR1 (368 aa).

Residues 1–24 (MGLAGAKNKRKLGNDPNNTKWSRN) are disordered. A compositionally biased stretch (polar residues) spans 15 to 24 (DPNNTKWSRN). One can recognise a G-patch domain in the interval 25 to 79 (TDTFGQKILRAQGWQPGEYLGAKDAAHAEWHTEANTTHIRVTLKDDTLGLGAKRN). Positions 144–337 (TPDEEAEEIP…GYSTPIPTGS (194 aa)) are disordered. The segment covering 176 to 186 (RRSDKEDDKLG) has biased composition (basic and acidic residues). Basic residues-rich tracts occupy residues 187–196 (KKEKKSKKRK) and 257–277 (DKKRDKKEKKERRDKKEKKEK). Low complexity predominate over residues 310–337 (PSSAPTPTDSNSSTPTGSGYSTPIPTGS).

This sequence belongs to the PINX1 family.

The protein resides in the nucleus. It is found in the nucleolus. Its function is as follows. Involved in rRNA-processing at A0, A1 and A2 sites and negatively regulates telomerase. This chain is Protein PXR1 (PXR1), found in Chaetomium globosum (strain ATCC 6205 / CBS 148.51 / DSM 1962 / NBRC 6347 / NRRL 1970) (Soil fungus).